A 335-amino-acid chain; its full sequence is UPF0353 protein MUL_1490 (335 aa).

A run of 2 helical transmembrane segments spans residues 18–38 (WFFLFLLVVAGLIAIYVVLQL) and 67–87 (IPAMLLALSLVLFTVAMAGPT). A VWFA domain is found at 98–298 (VVMLVIDVSQ…SVYVSLQQQI (201 aa)). Residues 309-329 (MGWLRLGALVLVAAALAALLI) traverse the membrane as a helical segment.

The protein belongs to the UPF0353 family.

The protein resides in the cell membrane. This is UPF0353 protein MUL_1490 from Mycobacterium ulcerans (strain Agy99).